The chain runs to 328 residues: Sin3 histone deacetylase corepressor complex component SDS3 (328 aa).

The span at 1–16 shows a compositional bias: low complexity; it reads MSAAGLLAPAPAQAGA. The disordered stretch occupies residues 1–65; the sequence is MSAAGLLAPA…DLAKHDEEDY (65 aa). At Ser2 the chain carries N-acetylserine. The tract at residues 2–170 is mediates interaction with USP17L2; the sequence is SAAGLLAPAP…IENEKLTMEL (169 aa). 2 stretches are compositionally biased toward acidic residues: residues 23-37 and 45-54; these read YPEE…EEDE and SDEDTEDASE. A phosphoserine mark is found at Ser32 and Ser45. Phosphothreonine is present on Thr49. Ser53 is modified (phosphoserine). Over residues 56 to 65 the composition is skewed to basic and acidic residues; that stretch reads DLAKHDEEDY. The stretch at 66 to 171 forms a coiled coil; that stretch reads VEMKEQMYQD…ENEKLTMELT (106 aa). Glycyl lysine isopeptide (Lys-Gly) (interchain with G-Cter in SUMO2) cross-links involve residues Lys69, Lys178, and Lys201. A sin3 interaction domain (SID) region spans residues 188–226; the sequence is RPNDPVPIPDKRRKPAPAQLNYLLTDEQIMEDLRTLNKL. Positions 226–252 are disordered; the sequence is LKSPKRPASPSSPEHLPATPAESPAQR. A phosphoserine mark is found at Ser228, Ser234, and Ser237. A Phosphothreonine modification is found at Thr244.

This sequence belongs to the SDS3 family. In terms of assembly, interacts with HCFC1. Homodimer. Component of the SIN3 histone deacetylase (HDAC) corepressor complex. Interacts with SIN3A. Interaction with SIN3B enhances the interaction between SIN3B and HDAC1 to form a complex. Component of a mSin3A corepressor complex that contains SIN3A, SAP130, SUDS3/SAP45, ARID4B/SAP180, HDAC1 and HDAC2. Interacts with USP17L2; the interaction is direct. Interacts with FOXK2. Polyubiquitinated. 'Lys-63'-polyubiquitinated SUDS3 positively regulates histone deacetylation. Regulated through deubiquitination by USP17L2/USP17 that cleaves 'Lys-63'-linked ubiquitin chains.

It localises to the nucleus. Functionally, regulatory protein which represses transcription and augments histone deacetylase activity of HDAC1. May have a potential role in tumor suppressor pathways through regulation of apoptosis. May function in the assembly and/or enzymatic activity of the mSin3A corepressor complex or in mediating interactions between the complex and other regulatory complexes. This Pongo abelii (Sumatran orangutan) protein is Sin3 histone deacetylase corepressor complex component SDS3 (SUDS3).